We begin with the raw amino-acid sequence, 1482 residues long: Chromosome partition protein MukB (1482 aa).

Residue 34 to 41 (GGNGAGKS) participates in ATP binding. Coiled coils occupy residues 337–418 (LNLV…QYQQ), 444–472 (LDTY…QTAH), 509–601 (RHLA…TSHA), 781–805 (AARE…ATLS), 835–1116 (EAEI…AKAG), and 1210–1265 (EAIE…LQSV). The flexible hinge stretch occupies residues 666–783 (PGGAEDARLN…SVPLFGRAAR (118 aa)). The segment at 1049-1077 (ADAGAEERARQRRDELHTRLSNNRSRRNQ) is disordered. The span at 1051–1066 (AGAEERARQRRDELHT) shows a compositional bias: basic and acidic residues.

This sequence belongs to the SMC family. MukB subfamily. In terms of assembly, homodimerization via its hinge domain. Binds to DNA via its C-terminal region. Interacts, and probably forms a ternary complex, with MukE and MukF via its C-terminal region. The complex formation is stimulated by calcium or magnesium. Interacts with tubulin-related protein FtsZ.

Its subcellular location is the cytoplasm. It localises to the nucleoid. Functionally, plays a central role in chromosome condensation, segregation and cell cycle progression. Functions as a homodimer, which is essential for chromosome partition. Involved in negative DNA supercoiling in vivo, and by this means organize and compact chromosomes. May achieve or facilitate chromosome segregation by condensation DNA from both sides of a centrally located replisome during cell division. This chain is Chromosome partition protein MukB, found in Cronobacter sakazakii (strain ATCC BAA-894) (Enterobacter sakazakii).